The chain runs to 146 residues: Large ribosomal subunit protein uL15 (146 aa).

2 stretches are compositionally biased toward basic residues: residues 1 to 13 (MIRK…RMRG) and 22 to 38 (SKKR…GQAG). The disordered stretch occupies residues 1-38 (MIRKRRKITRMRGSRTVGGGCSKKRRGAGHRGGRGQAG).

The protein belongs to the universal ribosomal protein uL15 family. Part of the 50S ribosomal subunit.

Functionally, binds to the 23S rRNA. The chain is Large ribosomal subunit protein uL15 from Methanothermobacter thermautotrophicus (strain ATCC 29096 / DSM 1053 / JCM 10044 / NBRC 100330 / Delta H) (Methanobacterium thermoautotrophicum).